A 282-amino-acid chain; its full sequence is F-box protein VBF (282 aa).

Positions 1–44 constitute an F-box domain; sequence MMMLPEACIANILAFTSPADAFSSSEVSSVFRLAGDSDFVWEKF.

As to quaternary structure, component of SCF(VBF) E3 ubiquitin ligase complex that interacts with VIP1. Interacts directly with SKP1A and VIP1. Forms a complex composed of VIP1, VBF and Agrobacterium virE2.

Functionally, component of SCF(VBF) E3 ubiquitin ligase complexes, which mediate the ubiquitination and subsequent proteasomal degradation of target proteins such as VIP1 and Agrobacterium virE2, after their implication in T-DNA translocation to the host nucleus (can functionally replace Agrobacterium VirF). Required during Agrobacterium-induced tumor formation. The protein is F-box protein VBF (VBF) of Arabidopsis thaliana (Mouse-ear cress).